The chain runs to 221 residues: Immediate early response gene 2 protein (221 aa).

Met-1 is modified (N-acetylmethionine). The disordered stretch occupies residues 54–156 (THQPEFPPSR…EGEATSEVSN (103 aa)). Basic and acidic residues predominate over residues 64–77 (RALDPRLHPPREPE). A compositionally biased stretch (low complexity) spans 125-136 (SDLSDGSDAGLV).

The protein belongs to the IER family.

The protein resides in the cytoplasm. It localises to the nucleus. Its function is as follows. DNA-binding protein that seems to act as a transcription factor. Involved in the regulation of neuronal differentiation, acts upon JNK-signaling pathway activation and plays a role in neurite outgrowth in hippocampal cells. May mediate with FIBP FGF-signaling in the establishment of laterality in the embryo. Promotes cell motility, seems to stimulate tumor metastasis. The chain is Immediate early response gene 2 protein (Ier2) from Rattus norvegicus (Rat).